A 149-amino-acid chain; its full sequence is Glutamyl-tRNA(Gln) amidotransferase subunit C, mitochondrial (149 aa).

The transit peptide at 1–25 (MNHLHRLFRITQVDRPVLLAITRRL) directs the protein to the mitochondrion.

It belongs to the GatC family. As to quaternary structure, subunit of the heterotrimeric GatCAB amidotransferase (AdT) complex, composed of A, B and C subunits.

The protein resides in the mitochondrion. The catalysed reaction is L-glutamyl-tRNA(Gln) + L-glutamine + ATP + H2O = L-glutaminyl-tRNA(Gln) + L-glutamate + ADP + phosphate + H(+). Functionally, allows the formation of correctly charged Gln-tRNA(Gln) through the transamidation of misacylated Glu-tRNA(Gln) in the mitochondria. The reaction takes place in the presence of glutamine and ATP through an activated gamma-phospho-Glu-tRNA(Gln). The protein is Glutamyl-tRNA(Gln) amidotransferase subunit C, mitochondrial of Branchiostoma floridae (Florida lancelet).